We begin with the raw amino-acid sequence, 379 residues long: Leukocyte elastase inhibitor A (379 aa).

Phosphoserine is present on S300.

This sequence belongs to the serpin family. Ov-serpin subfamily. In terms of assembly, monomer.

Its subcellular location is the secreted. The protein localises to the cytoplasm. The protein resides in the cytolytic granule. It is found in the early endosome. Its function is as follows. Regulates the activity of the neutrophil proteases. This Rattus norvegicus (Rat) protein is Leukocyte elastase inhibitor A (Serpinb1a).